A 205-amino-acid polypeptide reads, in one-letter code: Glycerol-3-phosphate acyltransferase (205 aa).

5 consecutive transmembrane segments (helical) span residues 4–24, 80–100, 107–127, 130–150, and 155–175; these read IAPGLVLLAYLCGSISSAILV, PFWLGLVAIAACVGHIWPVFF, GVATAFGAIAPIGLDLTGVMA, WLLTILLSGYSSLGAIVSALI, and VWWFKPQYTFPVSMLSCLILL.

The protein belongs to the PlsY family. As to quaternary structure, probably interacts with PlsX.

It localises to the cell inner membrane. It carries out the reaction an acyl phosphate + sn-glycerol 3-phosphate = a 1-acyl-sn-glycero-3-phosphate + phosphate. The protein operates within lipid metabolism; phospholipid metabolism. Functionally, catalyzes the transfer of an acyl group from acyl-phosphate (acyl-PO(4)) to glycerol-3-phosphate (G3P) to form lysophosphatidic acid (LPA). This enzyme utilizes acyl-phosphate as fatty acyl donor, but not acyl-CoA or acyl-ACP. The chain is Glycerol-3-phosphate acyltransferase from Klebsiella pneumoniae (strain 342).